The primary structure comprises 265 residues: Undecaprenyl-diphosphatase (265 aa).

8 consecutive transmembrane segments (helical) span residues 1–21 (MDWL…FLPI), 40–60 (GLAF…LAFH), 87–107 (WAVI…ENVI), 113–133 (ASLV…WADV), 151–173 (IIGF…TITA), 188–208 (SFLL…VELI), 214–234 (VAWG…WLCI), and 244–264 (IGML…LVWV).

This sequence belongs to the UppP family.

It localises to the cell inner membrane. It catalyses the reaction di-trans,octa-cis-undecaprenyl diphosphate + H2O = di-trans,octa-cis-undecaprenyl phosphate + phosphate + H(+). Functionally, catalyzes the dephosphorylation of undecaprenyl diphosphate (UPP). Confers resistance to bacitracin. In Chromohalobacter salexigens (strain ATCC BAA-138 / DSM 3043 / CIP 106854 / NCIMB 13768 / 1H11), this protein is Undecaprenyl-diphosphatase.